A 262-amino-acid chain; its full sequence is Inactive snake venom serine proteinase 13 (262 aa).

Positions 1-18 are cleaved as a signal peptide; it reads MGLIRVLANLLILQLSYA. A propeptide spanning residues 19–24 is cleaved from the precursor; sequence QKSSEL. The region spanning 25–250 is the Peptidase S1 domain; the sequence is VIGGDECNIN…HLDWIQSIIA (226 aa). 6 disulfide bridges follow: Cys31-Cys162, Cys49-Cys65, Cys97-Cys257, Cys141-Cys211, Cys173-Cys190, and Cys201-Cys226. N-linked (GlcNAc...) asparagine glycans are attached at residues Asn78, Asn102, and Asn153.

This sequence belongs to the peptidase S1 family. Snake venom subfamily. In terms of assembly, monomer. In terms of tissue distribution, expressed by the venom gland.

The protein resides in the secreted. The chain is Inactive snake venom serine proteinase 13 from Crotalus adamanteus (Eastern diamondback rattlesnake).